The chain runs to 102 residues: Small ribosomal subunit protein uS10 (102 aa).

It belongs to the universal ribosomal protein uS10 family. In terms of assembly, part of the 30S ribosomal subunit.

Functionally, involved in the binding of tRNA to the ribosomes. This Lactococcus lactis subsp. lactis (strain IL1403) (Streptococcus lactis) protein is Small ribosomal subunit protein uS10.